Consider the following 653-residue polypeptide: Mediator of RNA polymerase II transcription subunit 17 (653 aa).

The segment at Ser246–Ser271 is disordered.

The protein belongs to the Mediator complex subunit 17 family. As to quaternary structure, component of the Mediator complex.

The protein localises to the nucleus. In terms of biological role, component of the Mediator complex, a coactivator involved in the regulated transcription of nearly all RNA polymerase II-dependent genes. Mediator functions as a bridge to convey information from gene-specific regulatory proteins to the basal RNA polymerase II transcription machinery. The Mediator complex, having a compact conformation in its free form, is recruited to promoters by direct interactions with regulatory proteins and serves for the assembly of a functional preinitiation complex with RNA polymerase II and the general transcription factors. The protein is Mediator of RNA polymerase II transcription subunit 17 (MED17) of Arabidopsis thaliana (Mouse-ear cress).